The sequence spans 985 residues: Alanine--tRNA ligase, mitochondrial (985 aa).

A mitochondrion-targeting transit peptide spans 1–23; that stretch reads MAASVAAAAGRLRRAIGRSCPWQ. ATP is bound by residues R105, H123, W205, and 235–237; that span reads LWN. Residues N237 and D260 each coordinate L-alanine. Residue G264 participates in ATP binding. Positions 632, 636, 749, and 753 each coordinate Zn(2+).

Belongs to the class-II aminoacyl-tRNA synthetase family. Monomer. It depends on Zn(2+) as a cofactor.

It is found in the mitochondrion. The enzyme catalyses tRNA(Ala) + L-alanine + ATP = L-alanyl-tRNA(Ala) + AMP + diphosphate. The catalysed reaction is (S)-lactate + ATP + H(+) = (S)-lactoyl-AMP + diphosphate. It catalyses the reaction (S)-lactoyl-AMP + L-lysyl-[protein] = N(6)-[(S)-lactoyl]-L-lysyl-[protein] + AMP + 2 H(+). Catalyzes the attachment of alanine to tRNA(Ala) in a two-step reaction: alanine is first activated by ATP to form Ala-AMP and then transferred to the acceptor end of tRNA(Ala). Also edits incorrectly charged tRNA(Ala) via its editing domain. In presence of high levels of lactate, also acts as a protein lactyltransferase that mediates lactylation of lysine residues in target proteins, such as CGAS. Acts as an inhibitor of cGAS/STING signaling by catalyzing lactylation of CGAS, preventing the formation of liquid-like droplets in which CGAS is activated. The protein is Alanine--tRNA ligase, mitochondrial (Aars2) of Rattus norvegicus (Rat).